A 366-amino-acid polypeptide reads, in one-letter code: Peptide chain release factor 2 (366 aa).

Gln251 carries the N5-methylglutamine modification.

Belongs to the prokaryotic/mitochondrial release factor family. Methylated by PrmC. Methylation increases the termination efficiency of RF2.

It localises to the cytoplasm. In terms of biological role, peptide chain release factor 2 directs the termination of translation in response to the peptide chain termination codons UGA and UAA. In Listeria monocytogenes serovar 1/2a (strain ATCC BAA-679 / EGD-e), this protein is Peptide chain release factor 2 (prfB).